Here is a 721-residue protein sequence, read N- to C-terminus: Phosphoribosylformylglycinamidine synthase subunit PurL (721 aa).

H47 is a catalytic residue. ATP contacts are provided by Y50 and K89. E91 contributes to the Mg(2+) binding site. Substrate is bound by residues 92–95 (SHNH) and R114. The Proton acceptor role is filled by H93. D115 is a Mg(2+) binding site. Q238 lines the substrate pocket. D266 contributes to the Mg(2+) binding site. 310 to 312 (ESQ) is a binding site for substrate. Residues D490 and G527 each coordinate ATP. Position 528 (N528) interacts with Mg(2+). S530 contributes to the substrate binding site.

This sequence belongs to the FGAMS family. In terms of assembly, monomer. Part of the FGAM synthase complex composed of 1 PurL, 1 PurQ and 2 PurS subunits.

It localises to the cytoplasm. The enzyme catalyses N(2)-formyl-N(1)-(5-phospho-beta-D-ribosyl)glycinamide + L-glutamine + ATP + H2O = 2-formamido-N(1)-(5-O-phospho-beta-D-ribosyl)acetamidine + L-glutamate + ADP + phosphate + H(+). The protein operates within purine metabolism; IMP biosynthesis via de novo pathway; 5-amino-1-(5-phospho-D-ribosyl)imidazole from N(2)-formyl-N(1)-(5-phospho-D-ribosyl)glycinamide: step 1/2. Its function is as follows. Part of the phosphoribosylformylglycinamidine synthase complex involved in the purines biosynthetic pathway. Catalyzes the ATP-dependent conversion of formylglycinamide ribonucleotide (FGAR) and glutamine to yield formylglycinamidine ribonucleotide (FGAM) and glutamate. The FGAM synthase complex is composed of three subunits. PurQ produces an ammonia molecule by converting glutamine to glutamate. PurL transfers the ammonia molecule to FGAR to form FGAM in an ATP-dependent manner. PurS interacts with PurQ and PurL and is thought to assist in the transfer of the ammonia molecule from PurQ to PurL. The sequence is that of Phosphoribosylformylglycinamidine synthase subunit PurL from Ruegeria sp. (strain TM1040) (Silicibacter sp.).